A 583-amino-acid polypeptide reads, in one-letter code: Estrogen receptor (583 aa).

The modulating stretch occupies residues 1–138 (MYPEESRGSG…GFEITKNTRF (138 aa)). 2 NR C4-type zinc fingers span residues 139-159 (CAVC…CEGC) and 175-199 (CPAT…LRKC). Positions 139 to 204 (CAVCSDYASG…RLRKCYEVGM (66 aa)) form a DNA-binding region, nuclear receptor. Residues 205-265 (MKGGMRKDRG…PGGRSSLNNM (61 aa)) form a hinge region. The segment at 220–263 (EKHGPAQRQTSQNLPTHKASPQDGRKRAMSSSSTSGPGGRSSLN) is disordered. The NR LBD domain maps to 266 to 501 (PPDQVLLLLQ…DLLLEMLDAH (236 aa)). A disordered region spans residues 506-583 (PVKPSQSWSQ…GSHSDCTRIP (78 aa)). Positions 539 to 551 (ASSAGSSSGPQGS) are enriched in low complexity.

Belongs to the nuclear hormone receptor family. NR3 subfamily. As to quaternary structure, binds DNA as a homodimer. Can form a heterodimer with ER-beta.

It is found in the nucleus. The steroid hormones and their receptors are involved in the regulation of eukaryotic gene expression and affect cellular proliferation and differentiation in target tissues. This is Estrogen receptor (esr1) from Oreochromis aureus (Israeli tilapia).